A 428-amino-acid chain; its full sequence is Glutamate-1-semialdehyde 2,1-aminomutase (428 aa).

Lys-265 bears the N6-(pyridoxal phosphate)lysine mark.

Belongs to the class-III pyridoxal-phosphate-dependent aminotransferase family. HemL subfamily. In terms of assembly, homodimer. Pyridoxal 5'-phosphate serves as cofactor.

It is found in the cytoplasm. The catalysed reaction is (S)-4-amino-5-oxopentanoate = 5-aminolevulinate. It participates in porphyrin-containing compound metabolism; protoporphyrin-IX biosynthesis; 5-aminolevulinate from L-glutamyl-tRNA(Glu): step 2/2. The polypeptide is Glutamate-1-semialdehyde 2,1-aminomutase (Hamiltonella defensa subsp. Acyrthosiphon pisum (strain 5AT)).